A 360-amino-acid chain; its full sequence is Photosystem II protein D1 1 (360 aa).

3 helical membrane passes run 29 to 46 (YVGWFGVLLIPTALTAAI), 118 to 133 (HFLIAIYAYMGRQWEL), and 142 to 156 (WIPVAFSAPVAAATA). H118 is a chlorophyll a binding site. Residue Y126 coordinates pheophytin a. Residues D170 and E189 each coordinate [CaMn4O5] cluster. A helical transmembrane segment spans residues 197 to 218 (FHMIGVAGVFGGALFSAMHGSL). H198 is a chlorophyll a binding site. A quinone-binding positions include H215 and 264–265 (SF). H215 is a binding site for Fe cation. H272 contacts Fe cation. Residues 274 to 288 (FLAAWPVIGIWFAAL) form a helical membrane-spanning segment. [CaMn4O5] cluster is bound by residues H332, E333, D342, and A344. A propeptide spanning residues 345 to 360 (SGEVQPIALAAPAIAS) is cleaved from the precursor.

The protein belongs to the reaction center PufL/M/PsbA/D family. As to quaternary structure, PSII is composed of 1 copy each of membrane proteins PsbA, PsbB, PsbC, PsbD, PsbE, PsbF, PsbH, PsbI, PsbJ, PsbK, PsbL, PsbM, PsbT, PsbX, PsbY, PsbZ, Psb30/Ycf12, peripheral proteins PsbO, CyanoQ (PsbQ), PsbU, PsbV and a large number of cofactors. It forms dimeric complexes. The cofactor is The D1/D2 heterodimer binds P680, chlorophylls that are the primary electron donor of PSII, and subsequent electron acceptors. It shares a non-heme iron and each subunit binds pheophytin, quinone, additional chlorophylls, carotenoids and lipids. D1 provides most of the ligands for the Mn4-Ca-O5 cluster of the oxygen-evolving complex (OEC). There is also a Cl(-1) ion associated with D1 and D2, which is required for oxygen evolution. The PSII complex binds additional chlorophylls, carotenoids and specific lipids.. Post-translationally, tyr-161 forms a radical intermediate that is referred to as redox-active TyrZ, YZ or Y-Z. In terms of processing, C-terminally processed by CtpA; processing is essential to allow assembly of the oxygen-evolving complex and thus photosynthetic growth.

The protein localises to the cellular thylakoid membrane. The catalysed reaction is 2 a plastoquinone + 4 hnu + 2 H2O = 2 a plastoquinol + O2. Photosystem II (PSII) is a light-driven water:plastoquinone oxidoreductase that uses light energy to abstract electrons from H(2)O, generating O(2) and a proton gradient subsequently used for ATP formation. It consists of a core antenna complex that captures photons, and an electron transfer chain that converts photonic excitation into a charge separation. The D1/D2 (PsbA/PsbD) reaction center heterodimer binds P680, the primary electron donor of PSII as well as several subsequent electron acceptors. This chain is Photosystem II protein D1 1, found in Trichormus variabilis (strain ATCC 29413 / PCC 7937) (Anabaena variabilis).